Reading from the N-terminus, the 435-residue chain is Acetylcholine receptor-like protein cup-4 (435 aa).

The N-terminal stretch at 1–24 is a signal peptide; it reads MRLLLIFTVIFVFYLAILKRDVNA. N41, N68, N237, and N249 each carry an N-linked (GlcNAc...) asparagine glycan. A run of 2 helical transmembrane segments spans residues 298–318 and 341–361; these read VSFFAPTVSLAFVINLMAIYL and ITLFHILLISNIVSAVFHGVL. The N-linked (GlcNAc...) asparagine glycan is linked to N403. The helical transmembrane segment at 413–433 threads the bilayer; that stretch reads PLAGLAMFVYFVIMFILYLVV.

Belongs to the ligand-gated ion channel (TC 1.A.9) family. Acetylcholine receptor (TC 1.A.9.1) subfamily.

It is found in the cytoplasmic vesicle membrane. In terms of biological role, thought to regulate endocytosis in coelomocytes through modulation of phospholipase C activity. Possible acetylcholine receptor. This Caenorhabditis briggsae protein is Acetylcholine receptor-like protein cup-4.